Reading from the N-terminus, the 550-residue chain is Thioredoxin domain-containing protein 2 (550 aa).

Positions 1–50 (MFKKNQKLSKDKGLEVNSVQAGAPEESDVKLNNGGKANERGSNEFLDTAQ) are disordered. Phosphoserine occurs at positions 42 and 51. Positions 63–428 (MLHMSTEESE…IKSSEDVQPS (366 aa)) are disordered. 3 stretches are compositionally biased toward polar residues: residues 73–87 (PPQQ…SENT), 96–105 (PKSSTKNTQL), and 112–140 (KTSS…QGST). A run of 22 repeats spans residues 104-118 (QLKQ…SYSK), 119-133 (QTNS…AITT), 134-148 (YPKQ…ANGT), 149-163 (HDRE…EDLI), 164-178 (QSKK…EDSI), 179-193 (QSKK…EDPI), 194-208 (QSKK…EDTI), 209-223 (QSKN…EDPI), 224-238 (QSKK…EDSI), 239-252 (QSKK…SDTI), 253-267 (QSKE…QDTI), 268-282 (QSKG…KDSM), 283-297 (KSKE…KDSI), 298-312 (QSKE…QDSA), 313-327 (QPKE…KDSL), 328-342 (PSKE…EDTI), 343-357 (QAKE…DTIQ), 358-384 (AKEE…EDTI), 385-399 (QAKE…DTMQ), 400-412 (SKEE…EDTV), 413-425 (QSQE…SEDV), and 426-440 (QPSE…AEIE). Positions 104–440 (QLKQEDISKT…EIFPFEAEIE (337 aa)) are 22 X 15 AA approximate tandem repeat of Q-P-K-X-G-D-I-P-K-S-[PS]-E-[KE]-X-I. 4 stretches are compositionally biased toward basic and acidic residues: residues 148–205 (THDR…KSLE), 217–259 (KSSE…ESET), 277–304 (QVKD…ENKI), and 313–348 (QPKE…KEEI). S158 carries the post-translational modification Phosphoserine. Residues S351 and S379 each carry the phosphoserine modification. The region spanning 401-550 (KEEITVSPED…KLEKSIAELK (150 aa)) is the Thioredoxin domain. The residue at position 407 (S407) is a Phosphoserine. C477 and C480 are disulfide-bonded.

In terms of tissue distribution, testis-specific. Strongly expressed in the testicular seminiferous tubules, mostly in the round spermatids.

The protein resides in the cytoplasm. Its function is as follows. Probably plays a regulatory role in sperm development. May participate in regulation of fibrous sheath (FS) assembly by supporting the formation of disulfide bonds during sperm tail morphogenesis. May also be required to rectify incorrect disulfide pairing and generate suitable pairs between the FS constituents. Can reduce disulfide bonds in vitro in the presence of NADP and thioredoxin reductase. This Rattus norvegicus (Rat) protein is Thioredoxin domain-containing protein 2 (Txndc2).